The chain runs to 382 residues: Putative acetyl-CoA C-acetyltransferase VraB (382 aa).

The Acyl-thioester intermediate role is filled by C86. H338 functions as the Proton acceptor in the catalytic mechanism.

Belongs to the thiolase-like superfamily. Thiolase family.

This Staphylococcus epidermidis (strain ATCC 35984 / DSM 28319 / BCRC 17069 / CCUG 31568 / BM 3577 / RP62A) protein is Putative acetyl-CoA C-acetyltransferase VraB (vraB).